We begin with the raw amino-acid sequence, 239 residues long: Norbelladine 4'-O-methyltransferase 2 (239 aa).

Residues Val55, Glu77, 79-80 (GV), Ser85, Asp103, and Ala132 contribute to the S-adenosyl-L-methionine site. A divalent metal cation is bound at residue Asp155. Asp157 provides a ligand contact to S-adenosyl-L-methionine. The a divalent metal cation site is built by Asp181 and Asn182.

Belongs to the class I-like SAM-binding methyltransferase superfamily. Cation-dependent O-methyltransferase family. It depends on Mg(2+) as a cofactor.

It catalyses the reaction norbelladine + S-adenosyl-L-methionine = 4'-O-methylnorbelladine + S-adenosyl-L-homocysteine + H(+). It functions in the pathway alkaloid biosynthesis. 4'-O-methyltransferase converting norbelladine to 4'-O-methylnorbelladine. 4'-O-methylnorbelladine is a precursor to all Amaryllidaceae alkaloids such as galanthamine, lycorine and haemanthamine, and including haemanthamine- and crinamine-type alkaloids, promising anticancer agents. The protein is Norbelladine 4'-O-methyltransferase 2 of Narcissus aff. pseudonarcissus MK-2014 (Daffodil).